Reading from the N-terminus, the 398-residue chain is 4-hydroxy-3-methylbut-2-enyl diphosphate reductase (398 aa).

Cys66 lines the [4Fe-4S] cluster pocket. His96 is a binding site for (2E)-4-hydroxy-3-methylbut-2-enyl diphosphate. His96 is a dimethylallyl diphosphate binding site. His96 provides a ligand contact to isopentenyl diphosphate. Cys157 provides a ligand contact to [4Fe-4S] cluster. His185 contributes to the (2E)-4-hydroxy-3-methylbut-2-enyl diphosphate binding site. Residue His185 coordinates dimethylallyl diphosphate. Position 185 (His185) interacts with isopentenyl diphosphate. Glu187 functions as the Proton donor in the catalytic mechanism. Position 250 (Thr250) interacts with (2E)-4-hydroxy-3-methylbut-2-enyl diphosphate. Residue Cys288 participates in [4Fe-4S] cluster binding. (2E)-4-hydroxy-3-methylbut-2-enyl diphosphate is bound by residues Ser317, Ser318, Asn319, and Ser379. Dimethylallyl diphosphate-binding residues include Ser317, Ser318, Asn319, and Ser379. Positions 317, 318, 319, and 379 each coordinate isopentenyl diphosphate.

This sequence belongs to the IspH family. The cofactor is [4Fe-4S] cluster.

The catalysed reaction is isopentenyl diphosphate + 2 oxidized [2Fe-2S]-[ferredoxin] + H2O = (2E)-4-hydroxy-3-methylbut-2-enyl diphosphate + 2 reduced [2Fe-2S]-[ferredoxin] + 2 H(+). The enzyme catalyses dimethylallyl diphosphate + 2 oxidized [2Fe-2S]-[ferredoxin] + H2O = (2E)-4-hydroxy-3-methylbut-2-enyl diphosphate + 2 reduced [2Fe-2S]-[ferredoxin] + 2 H(+). Its pathway is isoprenoid biosynthesis; dimethylallyl diphosphate biosynthesis; dimethylallyl diphosphate from (2E)-4-hydroxy-3-methylbutenyl diphosphate: step 1/1. The protein operates within isoprenoid biosynthesis; isopentenyl diphosphate biosynthesis via DXP pathway; isopentenyl diphosphate from 1-deoxy-D-xylulose 5-phosphate: step 6/6. Its function is as follows. Catalyzes the conversion of 1-hydroxy-2-methyl-2-(E)-butenyl 4-diphosphate (HMBPP) into a mixture of isopentenyl diphosphate (IPP) and dimethylallyl diphosphate (DMAPP). Acts in the terminal step of the DOXP/MEP pathway for isoprenoid precursor biosynthesis. The sequence is that of 4-hydroxy-3-methylbut-2-enyl diphosphate reductase from Synechococcus sp. (strain ATCC 27144 / PCC 6301 / SAUG 1402/1) (Anacystis nidulans).